We begin with the raw amino-acid sequence, 118 residues long: Flowering-promoting factor 1-like protein 4 (118 aa).

This sequence belongs to the FPF1 family.

This chain is Flowering-promoting factor 1-like protein 4, found in Oryza sativa subsp. japonica (Rice).